The chain runs to 456 residues: MFS-type transporter ppzB (456 aa).

5 helical membrane-spanning segments follow: residues 1–21 (MGLFTDLVLYGIVLPALPFIM), 38–58 (GFLATYAGASVFFSVPAGWAA), 72–92 (VFLFVATAIFAFSTSLALLVV), 125–145 (IGTIFATISVGELAAPVLGGV), and 154–174 (AVFAVSAVMLAIDLGLRGLVI). Positions 206–225 (EAQERTHEGTPLLPQDDDDD) are disordered. 6 helical membrane-spanning segments follow: residues 255–275 (LAMLLSFVQALFIGTFDATVP), 284–304 (FSSLQVGLVFIALMLPYFALG), 318–338 (AAATSGYAFLVPCLLLLGLPE), 348–368 (VALFCTILALNGIGLAVVTSP), 398–418 (FGFSSLYFFTGLAVGPLLGGV), and 427–447 (VMGAVYAAISGVTAIVSFLFV).

Belongs to the major facilitator superfamily. TCR/Tet family.

The protein resides in the membrane. Functionally, MFS-type transporter; part of the gene cluster that mediates the biosynthesis of pyrrolopyrazines, secondary metabolites showing insecticidal activity. Probably involved in the secretion of peramine and other pyrrolopyrazines. The sequence is that of MFS-type transporter ppzB (ppzB) from Metarhizium majus (strain ARSEF 297).